The chain runs to 151 residues: MSLLGGMWKSTKPSRSKSPKPSSNPLRSSGLNSGMSSRLNSKSSLRSGHSRSSNTGRSSRQKSISGSLGSNPISSSRLNSKTLLSSIFMCKYLYPPWINNFGNFGRVEPPPLIEKNLKKSKKIKIKIHPWTGFPYNQVLSEKAKKYKKIRG.

Positions 1–77 are disordered; that stretch reads MSLLGGMWKS…LGSNPISSSR (77 aa). 2 stretches are compositionally biased toward low complexity: residues 19 to 54 and 63 to 76; these read PKPS…RSSN and SISG…ISSS.

This is an uncharacterized protein from Methanothermobacter marburgensis (strain ATCC BAA-927 / DSM 2133 / JCM 14651 / NBRC 100331 / OCM 82 / Marburg) (Methanobacterium thermoautotrophicum).